A 394-amino-acid polypeptide reads, in one-letter code: MAREKFDRSKPHVNVGTIGHIDHGKTTLTAAICTVLAKEGKSAATRYDEIDKAPEEKARGITINSAHVEYSSDKRHYAHVDCPGHADYIKNMITGAAQMDGAILVVSATDSVMPQTREHILLARQVGVPKMVVFLNKCDIASDEEVQELVAEEVRDLLTSYGFDGKNTPIIYGSALKALEGDPKWEAKIHDLIKAVDEWIPTPTREVDKPFLLAIEDTMTITGRGTVVTGRVERGELKVGQEVEIVGLKPIRKAVVTGIEMFKKELDSAMAGDNAGVLLRGVERKEVERGQVLAKPGSIKPHKKFKAEIYALKKEEGGRHTGFLNGYRPQFYFRTTDVTGSIALAENTEMVLPGDNASITVELIAPIACEKGSKFSIREGGRTVGAGTVTEVLE.

Residues 10-204 (KPHVNVGTIG…AVDEWIPTPT (195 aa)) enclose the tr-type G domain. Positions 19–26 (GHIDHGKT) are G1. 19 to 26 (GHIDHGKT) provides a ligand contact to GTP. Residue Thr26 participates in Mg(2+) binding. The G2 stretch occupies residues 60 to 64 (GITIN). A G3 region spans residues 81–84 (DCPG). GTP-binding positions include 81 to 85 (DCPGH) and 136 to 139 (NKCD). A G4 region spans residues 136 to 139 (NKCD). Positions 174 to 176 (SAL) are G5.

Belongs to the TRAFAC class translation factor GTPase superfamily. Classic translation factor GTPase family. EF-Tu/EF-1A subfamily. In terms of assembly, monomer.

The protein resides in the cytoplasm. The catalysed reaction is GTP + H2O = GDP + phosphate + H(+). In terms of biological role, GTP hydrolase that promotes the GTP-dependent binding of aminoacyl-tRNA to the A-site of ribosomes during protein biosynthesis. The polypeptide is Elongation factor Tu (Mycoplasma genitalium (strain ATCC 33530 / DSM 19775 / NCTC 10195 / G37) (Mycoplasmoides genitalium)).